The chain runs to 284 residues: Aliphatic sulfonates import ATP-binding protein SsuB (284 aa).

Positions 21 to 242 (LRIAHAVKRY…HRGAPAFARL (222 aa)) constitute an ABC transporter domain. 53–60 (GRSGCGKS) serves as a coordination point for ATP.

Belongs to the ABC transporter superfamily. Aliphatic sulfonates importer (TC 3.A.1.17.2) family. As to quaternary structure, the complex is composed of two ATP-binding proteins (SsuB), two transmembrane proteins (SsuC) and a solute-binding protein (SsuA).

It is found in the cell inner membrane. The enzyme catalyses ATP + H2O + aliphatic sulfonate-[sulfonate-binding protein]Side 1 = ADP + phosphate + aliphatic sulfonateSide 2 + [sulfonate-binding protein]Side 1.. In terms of biological role, part of the ABC transporter complex SsuABC involved in aliphatic sulfonates import. Responsible for energy coupling to the transport system. The chain is Aliphatic sulfonates import ATP-binding protein SsuB from Ralstonia nicotianae (strain ATCC BAA-1114 / GMI1000) (Ralstonia solanacearum).